Here is a 202-residue protein sequence, read N- to C-terminus: CASP-like protein 1U4 (202 aa).

Over 1–10 the chain is Cytoplasmic; sequence MCLPAKWLHP. The helical transmembrane segment at 11-31 threads the bilayer; it reads VSLIFRVAGIGLAAVSAAAML. At 32–56 the chain is on the extracellular side; sequence TASQCTVYADYGWRPRTVTYSDFPA. A helical membrane pass occupies residues 57-77; it reads FVYLVAATAIATLLEAVALFL. The Cytoplasmic segment spans residues 78-94; that stretch reads SWSKKGKSKKSWRVLTM. Residues 95 to 115 form a helical membrane-spanning segment; sequence LLLGAVVPALLYTSAGAAFAV. Residues 116-146 lie on the Extracellular side of the membrane; sequence GWEDIYYYLEPIGRRFSVCRSSVAGGRFCEH. Residues 147 to 167 form a helical membrane-spanning segment; sequence VHVSMWLALGAAVAVSFAEFL. Residues 168 to 202 lie on the Cytoplasmic side of the membrane; the sequence is TTFRWCHGSGSCSDSDSDSDSDSESGCGHGCHCKH.

Belongs to the Casparian strip membrane proteins (CASP) family. As to quaternary structure, homodimer and heterodimers.

It localises to the cell membrane. This is CASP-like protein 1U4 from Sorghum bicolor (Sorghum).